The chain runs to 231 residues: NADH-ubiquinone oxidoreductase chain 4 (231 aa).

6 helical membrane-spanning segments follow: residues 1 to 21 (PIAG…YGII), 34 to 54 (MFLP…LTCL), 63 to 85 (IAYS…TPWG), 89 to 111 (AMAL…NTTY), 128 to 148 (ILPM…AVPP), and 156 to 176 (LLIM…LGLS).

Belongs to the complex I subunit 4 family.

Its subcellular location is the mitochondrion membrane. The enzyme catalyses a ubiquinone + NADH + 5 H(+)(in) = a ubiquinol + NAD(+) + 4 H(+)(out). In terms of biological role, core subunit of the mitochondrial membrane respiratory chain NADH dehydrogenase (Complex I) that is believed to belong to the minimal assembly required for catalysis. Complex I functions in the transfer of electrons from NADH to the respiratory chain. The immediate electron acceptor for the enzyme is believed to be ubiquinone. The polypeptide is NADH-ubiquinone oxidoreductase chain 4 (MT-ND4) (Agkistrodon contortrix contortrix (Southern copperhead)).